The chain runs to 429 residues: Glutamate-1-semialdehyde 2,1-aminomutase 1 (429 aa).

Lys-268 is modified (N6-(pyridoxal phosphate)lysine).

Belongs to the class-III pyridoxal-phosphate-dependent aminotransferase family. HemL subfamily. As to quaternary structure, homodimer. Pyridoxal 5'-phosphate is required as a cofactor.

It is found in the cytoplasm. It carries out the reaction (S)-4-amino-5-oxopentanoate = 5-aminolevulinate. It participates in porphyrin-containing compound metabolism; protoporphyrin-IX biosynthesis; 5-aminolevulinate from L-glutamyl-tRNA(Glu): step 2/2. The sequence is that of Glutamate-1-semialdehyde 2,1-aminomutase 1 from Lysinibacillus sphaericus (strain C3-41).